The following is a 902-amino-acid chain: AAA+ ATPase ClpV1 (902 aa).

One can recognise a Clp R domain in the interval F10–D151. Repeat regions lie at residues L13 to L78 and L88 to D151. G237–T244 contacts ATP. Residues A441 to E559 are a coiled coil. G640–T647 is a binding site for ATP.

Belongs to the ClpA/ClpB family. Interacts with TagJ.

The protein resides in the cytoplasm. Component of the H1 type VI (H1-T6SS) secretion system that plays a role in the release of toxins targeting both eukaryotic and prokaryotic species. Acts as an AAA(+) ATPase that disassembles the contracted sheath, which resets the systems for reassembly of an extended sheath that is ready to fire again. The protein is AAA+ ATPase ClpV1 (clpV1) of Pseudomonas aeruginosa (strain ATCC 15692 / DSM 22644 / CIP 104116 / JCM 14847 / LMG 12228 / 1C / PRS 101 / PAO1).